The sequence spans 334 residues: N-acetyl-gamma-glutamyl-phosphate reductase (334 aa).

The active site involves Cys154.

It belongs to the NAGSA dehydrogenase family. Type 1 subfamily.

Its subcellular location is the cytoplasm. The enzyme catalyses N-acetyl-L-glutamate 5-semialdehyde + phosphate + NADP(+) = N-acetyl-L-glutamyl 5-phosphate + NADPH + H(+). The protein operates within amino-acid biosynthesis; L-arginine biosynthesis; N(2)-acetyl-L-ornithine from L-glutamate: step 3/4. Catalyzes the NADPH-dependent reduction of N-acetyl-5-glutamyl phosphate to yield N-acetyl-L-glutamate 5-semialdehyde. In Vibrio vulnificus (strain YJ016), this protein is N-acetyl-gamma-glutamyl-phosphate reductase.